The chain runs to 82 residues: Envelope small membrane protein (82 aa).

The Virion surface segment spans residues Met1 to Ile19. A helical transmembrane segment spans residues Ile20 to Ile40. Residues Lys41–Val82 lie on the Intravirion side of the membrane.

This sequence belongs to the alphacoronaviruses E protein family. As to quaternary structure, homopentamer. Interacts with membrane protein M in the budding compartment of the host cell, which is located between endoplasmic reticulum and the Golgi complex. Interacts with Nucleoprotein.

It localises to the host Golgi apparatus membrane. In terms of biological role, plays a central role in virus morphogenesis and assembly. Acts as a viroporin and self-assembles in host membranes forming pentameric protein-lipid pores that allow ion transport. Also plays a role in the induction of apoptosis. In Sus scrofa (Pig), this protein is Envelope small membrane protein.